The chain runs to 345 residues: 1-aminocyclopropane-1-carboxylate oxidase homolog 7 (345 aa).

Residue K16 forms a Glycyl lysine isopeptide (Lys-Gly) (interchain with G-Cter in ubiquitin) linkage. The Fe2OG dioxygenase domain maps to 194–293 (KGLHMICHYY…RISIACFFSS (100 aa)). Residues H218, D220, and H274 each coordinate Fe cation. Position 284 (R284) interacts with 2-oxoglutarate.

Belongs to the iron/ascorbate-dependent oxidoreductase family. Requires Fe(2+) as cofactor.

The protein is 1-aminocyclopropane-1-carboxylate oxidase homolog 7 of Arabidopsis thaliana (Mouse-ear cress).